Consider the following 765-residue polypeptide: Probable dipeptidyl peptidase 4 (765 aa).

Positions 1 to 14 (MKWSILLLVGCAAA) are cleaved as a signal peptide. N-linked (GlcNAc...) asparagine glycosylation is found at asparagine 35, asparagine 78, asparagine 101, asparagine 110, asparagine 169, asparagine 218, asparagine 465, and asparagine 490. Serine 613 (charge relay system) is an active-site residue. N-linked (GlcNAc...) asparagine glycosylation is present at asparagine 665. Active-site charge relay system residues include aspartate 690 and histidine 725.

This sequence belongs to the peptidase S9B family.

The protein localises to the secreted. The enzyme catalyses Release of an N-terminal dipeptide, Xaa-Yaa-|-Zaa-, from a polypeptide, preferentially when Yaa is Pro, provided Zaa is neither Pro nor hydroxyproline.. In terms of biological role, extracellular dipeptidyl-peptidase which removes N-terminal dipeptides sequentially from polypeptides having unsubstituted N-termini provided that the penultimate residue is proline. The polypeptide is Probable dipeptidyl peptidase 4 (dpp4) (Neosartorya fischeri (strain ATCC 1020 / DSM 3700 / CBS 544.65 / FGSC A1164 / JCM 1740 / NRRL 181 / WB 181) (Aspergillus fischerianus)).